The primary structure comprises 445 residues: Rab GDP dissociation inhibitor beta (445 aa).

N-acetylmethionine is present on Met1. Residue Lys57 is modified to N6-succinyllysine. Lys112 carries the post-translational modification N6-acetyllysine. Ser130 carries the post-translational modification Phosphoserine. At Lys269 the chain carries N6-acetyllysine. Residue Ser382 is modified to Phosphoserine.

The protein belongs to the Rab GDI family. Interacts with RHOH. Interacts with the GDP-bound inactive forms of RAB3A, RAB3B, RAB3C, RAB5A, RAB5B, RAB5C, RAB8A, RAB8B, RAB10, RAB12, RAB35, and RAB43; binds RAB3D to a lesser extent. Interacts with DZIP1; this interaction negatively regulates the interaction of GDI2 with GDP-bound RAB8A. In terms of tissue distribution, ubiquitously expressed.

The protein resides in the cytoplasm. It localises to the membrane. The protein localises to the golgi apparatus. Its subcellular location is the trans-Golgi network. In terms of biological role, GDP-dissociation inhibitor preventing the GDP to GTP exchange of most Rab proteins. By keeping these small GTPases in their inactive GDP-bound form regulates intracellular membrane trafficking. Negatively regulates protein transport to the cilium and ciliogenesis through the inhibition of RAB8A. The sequence is that of Rab GDP dissociation inhibitor beta (Gdi2) from Rattus norvegicus (Rat).